The following is a 246-amino-acid chain: Large ribosomal subunit protein uL3 (246 aa).

Disordered stretches follow at residues 140–162 (SHRSIGSTGGRQDPGKTFKNKKM) and 214–246 (ADVPLPGKFRENGSAGASQIEAAPEAPASEENA). Residue Gln-151 is modified to N5-methylglutamine. A compositionally biased stretch (low complexity) spans 234 to 246 (EAAPEAPASEENA).

This sequence belongs to the universal ribosomal protein uL3 family. In terms of assembly, part of the 50S ribosomal subunit. Forms a cluster with proteins L14 and L19. Methylated by PrmB.

One of the primary rRNA binding proteins, it binds directly near the 3'-end of the 23S rRNA, where it nucleates assembly of the 50S subunit. The polypeptide is Large ribosomal subunit protein uL3 (Methylorubrum extorquens (strain CM4 / NCIMB 13688) (Methylobacterium extorquens)).